The primary structure comprises 574 residues: Membrane protein insertase YidC (574 aa).

A helical membrane pass occupies residues 6–26 (VFLIFAWLMVAALLWMEWGKE). Residues 65–85 (QAGAPGKVPATSTTTATPAAA) form a disordered region. The next 5 membrane-spanning stretches (helical) occupy residues 350–370 (VIDY…FWVL), 376–396 (FLHN…LVLY), 447–467 (GGCL…WVLV), 491–511 (FILP…TPTP), and 525–545 (PLVF…YWVV).

It belongs to the OXA1/ALB3/YidC family. Type 1 subfamily. Interacts with the Sec translocase complex via SecD. Specifically interacts with transmembrane segments of nascent integral membrane proteins during membrane integration.

The protein resides in the cell inner membrane. Functionally, required for the insertion and/or proper folding and/or complex formation of integral membrane proteins into the membrane. Involved in integration of membrane proteins that insert both dependently and independently of the Sec translocase complex, as well as at least some lipoproteins. Aids folding of multispanning membrane proteins. The protein is Membrane protein insertase YidC of Xanthomonas oryzae pv. oryzae (strain PXO99A).